A 353-amino-acid chain; its full sequence is D-alanine--D-alanine ligase A (353 aa).

The ATP-grasp domain occupies 141–346 (KRLVNEAGLS…YPEIINRLVA (206 aa)). ATP is bound at residue 169–224 (EQALGLPIFIKPARQGSSVGVHKVVTEADYQAAMSDGFTYDDKLLAEEFIQAREVE). D300, E313, and N315 together coordinate Mg(2+).

The protein belongs to the D-alanine--D-alanine ligase family. The cofactor is Mg(2+). It depends on Mn(2+) as a cofactor.

Its subcellular location is the cytoplasm. It carries out the reaction 2 D-alanine + ATP = D-alanyl-D-alanine + ADP + phosphate + H(+). Its pathway is cell wall biogenesis; peptidoglycan biosynthesis. Its function is as follows. Cell wall formation. The polypeptide is D-alanine--D-alanine ligase A (Brucella suis biovar 1 (strain 1330)).